The following is a 351-amino-acid chain: ABC transporter nucleoside-binding protein BmpA (351 aa).

The signal sequence occupies residues Met1 to Gly21. Cys22 carries N-palmitoyl cysteine lipidation. Cys22 is lipidated: S-diacylglycerol cysteine.

It belongs to the BMP lipoprotein family. The complex is composed of two ATP-binding proteins (NupA), two transmembrane proteins (NupB and NupC) and a solute-binding protein (BmpA).

The protein resides in the cell membrane. In terms of biological role, part of an ABC transporter complex involved in the uptake of all common nucleosides. The sequence is that of ABC transporter nucleoside-binding protein BmpA from Lactococcus lactis subsp. cremoris (strain MG1363).